The chain runs to 104 residues: MSSVPASAYLTLAIILFCIGLFGALTKRNTVIVLVCIELMLNAANLNLVAFSKLGLFPNLTGQIFSLFTMAVAAAEAAVGLAILIALYRNRTTVQVDEMDTLKG.

3 consecutive transmembrane segments (helical) span residues 4–24, 31–51, and 67–87; these read VPAS…LFGA, VIVL…LVAF, and LFTM…LIAL.

It belongs to the complex I subunit 4L family. As to quaternary structure, NDH-1 is composed of 14 different subunits. Subunits NuoA, H, J, K, L, M, N constitute the membrane sector of the complex.

It is found in the cell membrane. The catalysed reaction is a quinone + NADH + 5 H(+)(in) = a quinol + NAD(+) + 4 H(+)(out). Functionally, NDH-1 shuttles electrons from NADH, via FMN and iron-sulfur (Fe-S) centers, to quinones in the respiratory chain. The immediate electron acceptor for the enzyme in this species is believed to be a menaquinone. Couples the redox reaction to proton translocation (for every two electrons transferred, four hydrogen ions are translocated across the cytoplasmic membrane), and thus conserves the redox energy in a proton gradient. The chain is NADH-quinone oxidoreductase subunit K from Bacillus cereus (strain G9842).